Reading from the N-terminus, the 498-residue chain is Cytochrome P450 71B24 (498 aa).

The chain crosses the membrane as a helical span at residues 1-21 (MSILLYFIALLSLIIIKKIKD). A heme-binding site is contributed by cysteine 442.

It belongs to the cytochrome P450 family. Heme is required as a cofactor.

The protein localises to the membrane. In Arabidopsis thaliana (Mouse-ear cress), this protein is Cytochrome P450 71B24 (CYP71B24).